Here is a 393-residue protein sequence, read N- to C-terminus: GDNF family receptor alpha-like (393 aa).

A signal peptide spans 1-19; that stretch reads MLVFIFLAVTLSSENESSS. Topologically, residues 20–349 are extracellular; the sequence is QTNDCAHLIQ…LTGFNSFFNG (330 aa). N-linked (GlcNAc...) asparagine glycosylation is found at Asn-59, Asn-65, Asn-101, and Asn-115. Disulfide bonds link Cys-131-Cys-189, Cys-138-Cys-144, Cys-155-Cys-167, Cys-162-Cys-210, Cys-191-Cys-198, Cys-220-Cys-291, Cys-227-Cys-233, Cys-244-Cys-275, Cys-252-Cys-258, Cys-269-Cys-316, and Cys-293-Cys-304. The segment at 149–228 is required for interaction with GDF15; it reads ALYLKACSAN…TCLSVIHTCR (80 aa). A helical transmembrane segment spans residues 350–370; the sequence is ELLYVVVCMAVTCGILFLVML. At 371–393 the chain is on the cytoplasmic side; that stretch reads KLRIQSEKRDPSSIEIAGGVIIQ.

Belongs to the GDNFR family. In terms of assembly, interacts (via the extracellular domain) with GDF15 and RET; receptor of GDF15, mediates cellular signaling through interaction with RET after GDF15-binding. Interaction with RET requires previous GDF15-binding. Cleaved and inactivated by MMP14, inhibiting the GDF15-GFRAL aversive response. Expressed in the brainstem, restricted to cells in the area postrema and the immediately adjacent region of the nucleus tractus solitarius.

The protein resides in the cell membrane. Specifically inhibited by 3P10 monoclonal antibody. Strongly activated by LY3463251, a long-acting and stable agonist composed of GDF15 conjugated monomeric human IgG4 Fc. Functionally, brainstem-restricted receptor for GDF15 hormone, which triggers an aversive response, characterized by nausea, vomiting, and/or loss of appetite in response to various stresses. The aversive response is both required to reduce continuing exposure to those stresses at the time of exposure and to promote avoidance behavior in the future. The GDF15-GFRAL aversive response is triggered by stresses, such as anticancer drugs (camptothecin or cisplatin), cancers or drugs such as metformin. Upon interaction with its ligand, GDF15, mediates the GDF15-induced autophosphorylation and activation of the RET tyrosine kinase receptor, leading to activation of MAPK- and AKT- signaling pathways. Ligand-binding activates GFRAL-expressing neurons localized in the area postrema and nucleus tractus solitarius of the brainstem. The GDF15-GFRAL signal induces expression of genes involved in metabolism, such as lipid metabolism in adipose tissues. The sequence is that of GDNF family receptor alpha-like (Gfral) from Mus musculus (Mouse).